A 412-amino-acid polypeptide reads, in one-letter code: Class E basic helix-loop-helix protein 40 (412 aa).

The tract at residues 1–21 (MERIPSAQPPPTCLPKAPGLE) is disordered. The segment at 1 to 139 (MERIPSAQPP…LSGRNVEAGQ (139 aa)) is essential for interaction with BMAL1, E-box binding and repressor activity against the CLOCK-BMAL1 heterodimer. Residues 52–107 (TYKLPHRLIEKKRRDRINECIAQLKDLLPEHLKLTTLGHLEKAVVLELTLKHVKAL) form the bHLH domain. A necessary for interaction with RXRA and repressor activity against RXRA region spans residues 75-79 (LKDLL). One can recognise an Orange domain in the interval 142–175 (FCSGFQTCAREVLQYLAKHENTRDLKSSQLVTHL). Lysine 159 is covalently cross-linked (Glycyl lysine isopeptide (Lys-Gly) (interchain with G-Cter in SUMO1, SUMO2 and SUMO3)). Lysine 167 participates in a covalent cross-link: Glycyl lysine isopeptide (Lys-Gly) (interchain with G-Cter in SUMO2). Disordered regions lie at residues 182–257 (LLQG…LRVE) and 279–298 (KQES…SDDE). At serine 235 the chain carries Phosphoserine. The segment covering 248–257 (ESEKSELRVE) has biased composition (basic and acidic residues). Lysine 279 is covalently cross-linked (Glycyl lysine isopeptide (Lys-Gly) (interchain with G-Cter in SUMO1); alternate). A Glycyl lysine isopeptide (Lys-Gly) (interchain with G-Cter in SUMO1, SUMO2 and SUMO3); alternate cross-link involves residue lysine 279. A Glycyl lysine isopeptide (Lys-Gly) (interchain with G-Cter in SUMO2); alternate cross-link involves residue lysine 279. Residue lysine 288 forms a Glycyl lysine isopeptide (Lys-Gly) (interchain with G-Cter in SUMO2) linkage. Serine 383 is subject to Phosphoserine.

Homodimer. Heterodimer with BHLHE41/DEC2. Interacts with TCF3/E47. Interacts with ubiquitin-conjugating enzyme UBE2I/UBC9. Interacts with HDAC1, SUMO1, RXRA and BMAL1. Post-translationally, ubiquitinated; which may lead to proteasomal degradation. In terms of processing, sumoylation inhibits its ubiquitination and promotes its negative regulation of the CLOCK-BMAL1 heterodimer transcriptional activator activity.

The protein localises to the cytoplasm. The protein resides in the nucleus. Transcriptional repressor involved in the regulation of the circadian rhythm by negatively regulating the activity of the clock genes and clock-controlled genes. Acts as the negative limb of a novel autoregulatory feedback loop (DEC loop) which differs from the one formed by the PER and CRY transcriptional repressors (PER/CRY loop). Both these loops are interlocked as it represses the expression of PER1/2 and in turn is repressed by PER1/2 and CRY1/2. Represses the activity of the circadian transcriptional activator: CLOCK-BMAL1|BMAL2 heterodimer by competing for the binding to E-box elements (5'-CACGTG-3') found within the promoters of its target genes. Negatively regulates its own expression and the expression of DBP and BHLHE41/DEC2. Acts as a corepressor of RXR and the RXR-LXR heterodimers and represses the ligand-induced RXRA and NR1H3/LXRA transactivation activity. May be involved in the regulation of chondrocyte differentiation via the cAMP pathway. Represses the transcription of NR0B2 and attentuates the transactivation of NR0B2 by the CLOCK-BMAL1 complex. Drives the circadian rhythm of blood pressure through transcriptional repression of ATP1B1 in the cardiovascular system. The polypeptide is Class E basic helix-loop-helix protein 40 (BHLHE40) (Ovis aries (Sheep)).